The sequence spans 2715 residues: G surface protein, allelic form 156 (2715 aa).

The signal sequence occupies residues 1-20 (MNNKFIIFSLLLALVASQTY). PSA repeat units follow at residues 111-171 (KTLD…NTCD), 177-237 (FATD…RICD), 243-303 (LTTD…KACA), 309-366 (IATN…KTCA), 372-404 (NNTH…APTT), 405-467 (MTTN…KTCV), 473-530 (NTTH…KQCV), 536-596 (TTTH…KACS), 602-673 (FTTT…KSCA), 688-748 (GFTF…KTCA), 752-812 (QTTH…ATCA), 820-895 (YDSD…GACT), 934-1001 (GLTF…AECA), 1008-1067 (GLDH…SNCA), 1073-1141 (GLTT…THCP), 1147-1215 (GLTD…TECA), 1221-1289 (GLTD…TECA), 1295-1363 (GLTN…TECA), 1369-1437 (GLTN…TECA), 1443-1507 (GLTK…LNCS), 1513-1578 (GFVH…TDCA), 1586-1652 (TITF…ATCD), 1693-1751 (TFNH…KTCD), 1759-1819 (RDDD…LNCG), 1827-1898 (YDTH…KSCT), 1904-1976 (TTTH…KSCA), 1984-2044 (YDDD…KSCD), 2080-2149 (FATD…KNCS), 2155-2215 (LTSE…KDCQ), 2219-2286 (GTTH…TSCK), 2290-2355 (WNND…TSCA), 2359-2430 (YTTH…QSCA), 2434-2500 (GTTH…LTCA), and 2505-2573 (GTAT…TACT).

It is found in the cell membrane. Its function is as follows. This protein is the surface antigen or immobilization antigen of Paramecium primaurelia. This is G surface protein, allelic form 156 (156G) from Paramecium primaurelia.